A 678-amino-acid chain; its full sequence is MLKTDFNQPKGSTIGVLRDGRTIQQTFDKMRYADTIQELRTMEPVGPRDVATVRRATEDSVLVNAPVYYDKNDTTSPDDGISVFVTAGGARWKFNTFKGYCAGLAGLKEDGSNVTTVVNGIVNRIVAKMVAAGRVNNQQRTVNIPVTGDAPEWKLTGPLVWPTVISLVFHGSVLLDGTSLTAGKILNCNNVPFMDRLTVAIMAAGTNPTDRPGRVNQAVGRAALTCIGGEVTVRLPGTQMDGSNNPTIHTVGAMIGNDAACLLDARDIYFEKFNIIGAKTGIEFGCYNTFMCGVEHFNVSRCYDGFSSPTLGSNYGERMYLRNGTIGNMDRHGAYLVGGGDFTLENVSVDFLGGDLAHFGPLSPAEYKHLSGHIEGVKGSLAAKEMPASYSKALVILGKAVRRDDRVVDQNDYRGVRQLFACPQNPYGRMLKVINESYAPGREGQVPNNPYPCETGWPGNSGVELILPKDTFVDTPYVNSYSPAVRNSVNQTISFTTASTGPLGGNVLSTDYAFAAEIIGGATCSYGTPAEATSDGYMPFIITLSDPSDVVYLFCTNRFRPGSGQSVLWGNCSVTLVGTTGSIILAPVIASYLGTTWTANTTTGAVTATPIRRGIQEGGTVDMSALAAAGGIPNGTYQAMPSRSVQGFYLGCDHAVAGFKITGGTGQVRLKLPVWWFR.

The protein in the N-terminal section; belongs to the Przondovirus depolymerase 2 family. Homotrimer. Interacts (via N-terminus) with depolymerase 1 (via N-terminus); this interaction probably gives rise to a branched tailspike.

It is found in the virion. In terms of biological role, functions as a receptor binding protein (RBP) and probably mediates the attachment to the host capsular exopolysaccharides. Displays a depolymerase activity that specifically degrades the K56-type polysaccharides of Klebsiella pneumoniae capsule, which allows the phage to reach the host cell membrane and bind the entry receptor. The polypeptide is Depolymerase 2, capsule K56-specific (Klebsiella pneumoniae (Bacteriophage KN3-1)).